The chain runs to 1823 residues: Laminin subunit alpha-4 (1823 aa).

A signal peptide spans 1–24 (MALSSAWRSVLPLWLLWSAACSRA). Ser39 carries O-linked (Xyl...) (chondroitin sulfate) serine glycosylation. Disulfide bonds link Cys82/Cys91, Cys84/Cys98, Cys101/Cys110, Cys113/Cys129, Cys132/Cys146, Cys134/Cys155, Cys157/Cys166, Cys169/Cys184, Cys187/Cys202, Cys189/Cys209, Cys212/Cys221, and Cys224/Cys238. Laminin EGF-like domains follow at residues 82–131 (CDCN…FCQP), 132–186 (CPCP…TCKK), and 187–240 (CDCS…NCAV). Asn104 carries an N-linked (GlcNAc...) asparagine glycan. N-linked (GlcNAc...) asparagine glycosylation occurs at Asn215. A Laminin EGF-like 4; truncated domain is found at 241–255 (CNCGGGPCDSVTGEC). A domain II and I region spans residues 256-832 (LEEGFEPPTG…AQTRSVASKI (577 aa)). An N-linked (GlcNAc...) asparagine glycan is attached at Asn315. Positions 320–403 (LLKTKLSERE…KIQEINNKML (84 aa)) form a coiled coil. A glycan (N-linked (GlcNAc...) asparagine) is linked at Asn465. Positions 473 to 528 (VVLEQLDDYNAKLSDLQEALDQALNYVRDAEDMNRATAARQRDHEKQQERVREQME) form a coiled coil. Residues Asn531, Asn557, Asn578, Asn581, Asn638, and Asn646 are each glycosylated (N-linked (GlcNAc...) asparagine). Residues 581 to 614 (NLSHDLVQEAIDHAQDLQQEANELSRKLHSSDMN) are a coiled coil. Residues 662–724 (IIYHKDESEN…AVKQLQAAER (63 aa)) are a coiled coil. The short motif at 724–726 (RGD) is the Cell attachment site element. N-linked (GlcNAc...) asparagine glycosylation is found at Asn742, Asn758, Asn761, Asn787, and Asn810. Positions 777–806 (AVNSARDAVRNLTEVVPQLLDQLRTVEQKR) form a coiled coil. Laminin G-like domains are found at residues 833–1035 (QVSM…SVPC), 1047–1227 (AASY…GYGC), and 1234–1402 (SRRA…LYEC). A disulfide bridge links Cys1005 with Cys1035. N-linked (GlcNAc...) asparagine glycosylation occurs at Asn1093. An intrachain disulfide couples Cys1201 to Cys1227. Residues Asn1288 and Asn1366 are each glycosylated (N-linked (GlcNAc...) asparagine). An intrachain disulfide couples Cys1370 to Cys1402. N-linked (GlcNAc...) asparagine glycosylation occurs at Asn1418. Residues 1419–1440 (LSKPKASQNKKGGKSKDAPSWD) form a disordered region. 2 Laminin G-like domains span residues 1469–1640 (AYQY…VTPC) and 1647–1820 (TGTY…INSC). 2 disulfides stabilise this stretch: Cys1617–Cys1640 and Cys1792–Cys1820.

As to quaternary structure, laminin is a complex glycoprotein, consisting of three different polypeptide chains (alpha, beta, gamma), which are bound to each other by disulfide bonds into a cross-shaped molecule comprising one long and three short arms with globules at each end. Alpha-4 is a subunit of laminin-8 (laminin-411), laminin-9 (laminin-421) and laminin-14 (laminin-423). As to expression, detected in placenta (at protein level). Detected in fibroblasts and urine (at protein level). In adult, strong expression in heart, lung, ovary small and large intestines, placenta, liver; weak or no expression in skeletal muscle, kidney, pancreas, testis, prostate, brain. High expression in fetal lung and kidney. Expression in fetal and newborn tissues is observed in certain mesenchymal cells in tissues such as smooth muscle and dermis.

The protein resides in the secreted. Its subcellular location is the extracellular space. It is found in the extracellular matrix. It localises to the basement membrane. In terms of biological role, binding to cells via a high affinity receptor, laminin is thought to mediate the attachment, migration and organization of cells into tissues during embryonic development by interacting with other extracellular matrix components. The protein is Laminin subunit alpha-4 (LAMA4) of Homo sapiens (Human).